A 296-amino-acid polypeptide reads, in one-letter code: 4-hydroxybenzoate octaprenyltransferase (296 aa).

Transmembrane regions (helical) follow at residues 22–42, 46–66, 99–121, 139–159, 163–183, 211–231, 238–258, and 270–290; these read PIGILLLLWPTLWALWLSALG, WIVVWIFILGTVLMRSAGCVI, LFAGLSLLSFLLVVFLGNTLVIW, FFAIPQAYLGVAFGFGIPMAY, LGEVPAEAWWLLLANVFWAVA, FDVAAVMLCYGVTLAIIGGIG, PAFYAGLAVATCIMGVHYTWI, and FLHNNWVGLSIFVGIVVDFLV.

It belongs to the UbiA prenyltransferase family. Mg(2+) is required as a cofactor.

The protein resides in the cell inner membrane. The enzyme catalyses all-trans-octaprenyl diphosphate + 4-hydroxybenzoate = 4-hydroxy-3-(all-trans-octaprenyl)benzoate + diphosphate. The protein operates within cofactor biosynthesis; ubiquinone biosynthesis. In terms of biological role, catalyzes the prenylation of para-hydroxybenzoate (PHB) with an all-trans polyprenyl group. Mediates the second step in the final reaction sequence of ubiquinone-8 (UQ-8) biosynthesis, which is the condensation of the polyisoprenoid side chain with PHB, generating the first membrane-bound Q intermediate 3-octaprenyl-4-hydroxybenzoate. In Dechloromonas aromatica (strain RCB), this protein is 4-hydroxybenzoate octaprenyltransferase.